The sequence spans 409 residues: Small ribosomal subunit protein mS47 (409 aa).

The N-terminal 26 residues, 1–26 (MQTVKALRRVSEPLQWVRSVSYGRRF), are a transit peptide targeting the mitochondrion. The disordered stretch occupies residues 388 to 409 (ASELDDSDSELKLPTAQREPYF).

The protein belongs to the enoyl-CoA hydratase/isomerase family. Mitochondrion-specific ribosomal protein mS47 subfamily. Component of the mitochondrial ribosome small subunit.

Its subcellular location is the mitochondrion. The protein is Small ribosomal subunit protein mS47 of Arabidopsis thaliana (Mouse-ear cress).